The primary structure comprises 431 residues: MKMQSPKMEQEEVEEERMRNKWPWMKAAQLMEFRMQALVYRYIEAGLRVPHHLVVPIWNSLALSSSSNYNYHSSSLLSNKGVTHIDTLETEPTRCRRTDGKKWRCSNTVLLFEKYCERHMHRGRKRSRKLVESSSEVASSSTKYDNTYGLDRYNESQSHLHGTISGSSNAQVVTIASLPSARSCENVIRPSLVISEFTNKSVSHGRKNMEMSYDDFINEKEASMCVGVVPLQGDESKPSVQKFFPEVSDKCLEAAKFSSNRKNDIIARSREWKNMNVNGGLFHGIHFSPDTVLQERGCFRLQGVETDNEPGRCRRTDGKKWRCSKDVLSGQKYCDKHMHRGMKKKHPVDTTNSHENAGFSPLTVETAVRSVVPCKDGDDQKHSVSVMGITLPRVSDEKSTSSCSTDTTITDTALRGEDDDEEYLSLFSPGV.

Positions Trp24–Asn59 constitute a QLQ domain. WRC domains lie at Glu89–Ser133 and Asp307–Thr351. Short sequence motifs (bipartite nuclear localization signal) lie at residues Arg94–Arg104, Arg122–Lys129, Arg312–Arg322, and Arg340–Lys345.

Belongs to the GRF family. As to quaternary structure, interacts with GIF1. In terms of tissue distribution, detected in the shoot apical meristem (SAM) and in young leaf primordium.

The protein localises to the nucleus. In terms of biological role, transcription activator that plays a role in the regulation of cell expansion in leaf and cotyledons tissues. Component of a network formed by miR396, the GRFs and their interacting factors (GIFs) acting in the regulation of meristem function, at least partially through the control of cell proliferation. The chain is Growth-regulating factor 9 (GRF9) from Arabidopsis thaliana (Mouse-ear cress).